Here is a 144-residue protein sequence, read N- to C-terminus: Large ribosomal subunit protein uL11 (144 aa).

This sequence belongs to the universal ribosomal protein uL11 family. In terms of assembly, part of the ribosomal stalk of the 50S ribosomal subunit. Interacts with L10 and the large rRNA to form the base of the stalk. L10 forms an elongated spine to which L12 dimers bind in a sequential fashion forming a multimeric L10(L12)X complex. In terms of processing, one or more lysine residues are methylated.

Forms part of the ribosomal stalk which helps the ribosome interact with GTP-bound translation factors. This chain is Large ribosomal subunit protein uL11, found in Rhodococcus opacus (strain B4).